Reading from the N-terminus, the 147-residue chain is Large ribosomal subunit protein uL13 (147 aa).

The protein belongs to the universal ribosomal protein uL13 family. Part of the 50S ribosomal subunit.

Its function is as follows. This protein is one of the early assembly proteins of the 50S ribosomal subunit, although it is not seen to bind rRNA by itself. It is important during the early stages of 50S assembly. This is Large ribosomal subunit protein uL13 from Polaromonas naphthalenivorans (strain CJ2).